The sequence spans 80 residues: Exodeoxyribonuclease 7 small subunit (80 aa).

It belongs to the XseB family. As to quaternary structure, heterooligomer composed of large and small subunits.

It localises to the cytoplasm. It catalyses the reaction Exonucleolytic cleavage in either 5'- to 3'- or 3'- to 5'-direction to yield nucleoside 5'-phosphates.. In terms of biological role, bidirectionally degrades single-stranded DNA into large acid-insoluble oligonucleotides, which are then degraded further into small acid-soluble oligonucleotides. The chain is Exodeoxyribonuclease 7 small subunit from Escherichia coli O139:H28 (strain E24377A / ETEC).